A 172-amino-acid polypeptide reads, in one-letter code: L-methionine sulfoximine/L-methionine sulfone acetyltransferase (172 aa).

Residues 3–166 (ASIRDAGVAD…DLTFMQLNLD (164 aa)) form the N-acetyltransferase domain. Residues 75-77 (RPF) and 85-87 (EHS) contribute to the substrate site. Acetyl-CoA contacts are provided by residues 88-90 (VYV), 96-101 (GKGLGV), and N127.

As to quaternary structure, homodimer.

The catalysed reaction is L-methionine sulfoximine + acetyl-CoA = N-acetyl-L-methionine sulfoximine + CoA + H(+). The enzyme catalyses L-methionine sulfone + acetyl-CoA = N-acetyl-L-methionine sulfone + CoA + H(+). In terms of biological role, plays a role in the resistance against the toxic effects of L-methionine sulfoximine (MSX), a rare amino acid, which inhibits glutamine synthetase (GlnA). Catalyzes the acetylation of L-methionine sulfoximine (MSX). It can also use L-methionine sulfone (MSO). The chain is L-methionine sulfoximine/L-methionine sulfone acetyltransferase from Pseudomonas paraeruginosa (strain DSM 24068 / PA7) (Pseudomonas aeruginosa (strain PA7)).